The primary structure comprises 182 residues: Putative lipoprotein LpqE (182 aa).

Residues 1–29 (MNRCNIRLRLAGMTTWVASIALLAAALSG) form the signal peptide. The N-palmitoyl cysteine moiety is linked to residue Cys30. Cys30 is lipidated: S-diacylglycerol cysteine.

The protein resides in the cell membrane. This chain is Putative lipoprotein LpqE (lpqE), found in Mycobacterium bovis (strain ATCC BAA-935 / AF2122/97).